The primary structure comprises 93 residues: Small ribosomal subunit protein bS18c (93 aa).

This sequence belongs to the bacterial ribosomal protein bS18 family. Part of the 30S ribosomal subunit.

The protein localises to the plastid. Its subcellular location is the chloroplast. This Pinus koraiensis (Korean pine) protein is Small ribosomal subunit protein bS18c.